A 204-amino-acid chain; its full sequence is Tumor protein D53 (204 aa).

Residues 1-31 (MEAQAQGLLETEPLQGRDGDAVGSADFSSML) form a disordered region. The stretch at 22–73 (VGSADFSSMLSEEEKEELKAELIQLEDEITTLRQVLSAKERHLVEIKQKLGM) forms a coiled coil. Phosphoserine is present on residues Ser29, Ser86, Ser122, and Ser131. Omega-N-methylarginine is present on Arg133. Thr146 is subject to Phosphothreonine. Phosphoserine is present on residues Ser149 and Ser174. Positions 164-204 (KVGGTNHGGGSFEEVLNSTAHASSQNASAGSRQTKDEELQC) are disordered. Positions 179–195 (LNSTAHASSQNASAGSR) are enriched in polar residues.

Belongs to the TPD52 family. Forms a homodimer or heterodimer with other members of the family.

This Mus musculus (Mouse) protein is Tumor protein D53 (Tpd52l1).